Consider the following 650-residue polypeptide: MGPASPAARGLSRRPGQPPLPLLLPLLLLLLRAQPAIGSLAGGSPGAAEAPGSAQVAGLCGRLTLHRDLRTGRWEPDPQRSRRCLRDPQRVLEYCRQMYPELQIARVEQATQAIPMERWCGGSRSGSCAHPHHQVVPFRCLPGEFVSEALLVPEGCRFLHQERMDQCESSTRRHQEAQEACSSQGLILHGSGMLLPCGSDRFRGVEYVCCPPPGTPDPSGTAVGDPSTRSWPPGSRVEGAEDEEEEESFPQPVDDYFVEPPQAEEEEETVPPPSSHTLAVVGKVTPTPRPTDGVDIYFGMPGEISEHEGFLRAKMDLEERRMRQINEVMREWAMADNQSKNLPKADRQALNEHFQSILQTLEEQVSGERQRLVETHATRVIALINDQRRAALEGFLAALQADPPQAERVLLALRRYLRAEQKEQRHTLRHYQHVAAVDPEKAQQMRFQVHTHLQVIEERVNQSLGLLDQNPHLAQELRPQIQELLHSEHLGPSELEAPAPGGSSEDKGGLQPPDSKDDTPMTLPKGSTEQDAASPEKEKMNPLEQYERKVNASVPRGFPFHSSEIQRDELAPAGTGVSREAVSGLLIMGAGGGSLIVLSMLLLRRKKPYGAISHGVVEVDPMLTLEEQQLRELQRHGYENPTYRFLEERP.

A signal peptide spans 1-38 (MGPASPAARGLSRRPGQPPLPLLLPLLLLLLRAQPAIG). Over 39–580 (SLAGGSPGAA…APAGTGVSRE (542 aa)) the chain is Extracellular. Residues 50 to 146 (APGSAQVAGL…PFRCLPGEFV (97 aa)) form a GFLD subdomain region. Positions 50 to 212 (APGSAQVAGL…RGVEYVCCPP (163 aa)) constitute an E1 domain. 6 disulfide bridges follow: Cys60–Cys84, Cys95–Cys140, Cys120–Cys128, Cys156–Cys210, Cys167–Cys197, and Cys181–Cys209. Positions 154–212 (EGCRFLHQERMDQCESSTRRHQEAQEACSSQGLILHGSGMLLPCGSDRFRGVEYVCCPP) are cuBD subdomain. Position 174 (His174) interacts with Cu(2+). Zn(2+) is bound by residues Glu206, Cys209, and Cys210. The interval 214–287 (GTPDPSGTAV…LAVVGKVTPT (74 aa)) is disordered. Residue Thr215 is glycosylated (O-linked (GalNAc...) threonine). O-linked (GalNAc...) serine glycosylation is present at Ser227. A glycan (O-linked (GalNAc...) threonine) is linked at Thr228. The O-glycosylated at three sites stretch occupies residues 285–305 (TPTPRPTDGVDIYFGMPGEIS). Residues 293-484 (GVDIYFGMPG…QELRPQIQEL (192 aa)) enclose the E2 domain. Heparin-binding regions lie at residues 310–342 (FLRAKMDLEERRMRQINEVMREWAMADNQSKNL) and 410–441 (LLALRRYLRAEQKEQRHTLRHYQHVAAVDPEK). Residue Asn337 is glycosylated (N-linked (GlcNAc...) asparagine). Positions 442-459 (AQQMRFQVHTHLQVIEER) are collagen-binding. A glycan (N-linked (GlcNAc...) asparagine) is linked at Asn461. Positions 492–546 (PSELEAPAPGGSSEDKGGLQPPDSKDDTPMTLPKGSTEQDAASPEKEKMNPLEQY) are disordered. Composition is skewed to basic and acidic residues over residues 504 to 519 (SEDKGGLQPPDSKDDT) and 534 to 546 (SPEKEKMNPLEQY). The N-linked (GlcNAc...) asparagine glycan is linked to Asn551. Residue His561 coordinates Cu(2+). His561 is a binding site for Zn(2+). Residues 581–603 (AVSGLLIMGAGGGSLIVLSMLLL) traverse the membrane as a helical segment. The short motif at 604 to 615 (RRKKPYGAISHG) is the Basolateral sorting signal element. Topologically, residues 604–650 (RRKKPYGAISHGVVEVDPMLTLEEQQLRELQRHGYENPTYRFLEERP) are cytoplasmic. The tract at residues 632 to 649 (ELQRHGYENPTYRFLEER) is interaction with DAB1. Residues 636–650 (HGYENPTYRFLEERP) are interaction with DAB2. The Clathrin-binding motif lies at 640–643 (NPTY). An NPXY motif; contains endocytosis signal motif is present at residues 640–643 (NPTY).

This sequence belongs to the APP family. Monomer and homodimer. Heparin binding promotes homodimerization. Binds, via its C-terminus, to the PID domain of several cytoplasmic proteins, including APBB and APBA family members, MAPK8IP1 and DAB1. Binding to Dab1 inhibits its serine phosphorylation. Interacts with CPEB1. Interacts (via NPXY motif) with DAB2 (via PID domain); the interaction is impaired by tyrosine phosphorylation of the NPXY motif. Interacts (via NPXY motif) with DAB1. Post-translationally, proteolytically cleaved by caspases during neuronal apoptosis. Cleaved, in vitro, at Asp-620 by caspase-3. In terms of processing, N- and O-glycosylated. O-glycosylation with core 1 or possibly core 8 glycans. Glycosylation on Ser-227 is the preferred site to Thr-228. As to expression, expressed in the cerebral cortex where it is localized to the postsynaptic density (PSD).

The protein localises to the cell membrane. The protein resides in the cytoplasm. Its function is as follows. May play a role in postsynaptic function. The C-terminal gamma-secretase processed fragment, ALID1, activates transcription activation through APBB1 (Fe65) binding. Couples to JIP signal transduction through C-terminal binding. May interact with cellular G-protein signaling pathways. Can regulate neurite outgrowth through binding to components of the extracellular matrix such as heparin and collagen I. Functionally, the gamma-CTF peptide, C30, is a potent enhancer of neuronal apoptosis. This is Amyloid beta precursor like protein 1 (APLP1) from Homo sapiens (Human).